A 585-amino-acid chain; its full sequence is NADP-reducing hydrogenase subunit HndD (585 aa).

In terms of domain architecture, 2Fe-2S ferredoxin-type spans 2 to 85; sequence SMLTITIDGK…NMVVKTNSLR (84 aa). [2Fe-2S] cluster is bound by residues cysteine 36, cysteine 52, cysteine 55, and cysteine 69. Residues 85–124 form the 4Fe-4S His(Cys)3-ligated-type domain; that stretch reads RVLNARRTVLELLLSDHPKDCLVCAKSGECELQTLAERFG. Positions 101, 105, 108, and 114 each coordinate [4Fe-4S] cluster. 2 consecutive 4Fe-4S ferredoxin-type domains span residues 144–174 and 185–216; these read ASII…VLSG and PAFE…EHEY.

In terms of assembly, heterotetramer composed of HndA, HndB, HndC and HndD subunits. HndD is probably the hydrogenase subunit. [4Fe-4S] cluster serves as cofactor.

It catalyses the reaction H2 + NADP(+) = NADPH + H(+). With respect to regulation, inhibited by oxygen. Catalyzes the reduction of NADP in the presence of molecular H(2) to yield NADPH. The chain is NADP-reducing hydrogenase subunit HndD (hndD) from Solidesulfovibrio fructosivorans (Desulfovibrio fructosivorans).